A 125-amino-acid polypeptide reads, in one-letter code: Small ribosomal subunit protein uS12 (125 aa).

The residue at position 89 (Asp-89) is a 3-methylthioaspartic acid.

The protein belongs to the universal ribosomal protein uS12 family. Part of the 30S ribosomal subunit. Contacts proteins S8 and S17. May interact with IF1 in the 30S initiation complex.

Its function is as follows. With S4 and S5 plays an important role in translational accuracy. Functionally, interacts with and stabilizes bases of the 16S rRNA that are involved in tRNA selection in the A site and with the mRNA backbone. Located at the interface of the 30S and 50S subunits, it traverses the body of the 30S subunit contacting proteins on the other side and probably holding the rRNA structure together. The combined cluster of proteins S8, S12 and S17 appears to hold together the shoulder and platform of the 30S subunit. The chain is Small ribosomal subunit protein uS12 from Cupriavidus metallidurans (strain ATCC 43123 / DSM 2839 / NBRC 102507 / CH34) (Ralstonia metallidurans).